Reading from the N-terminus, the 512-residue chain is Probable pectinesterase/pectinesterase inhibitor 54 (512 aa).

An N-terminal signal peptide occupies residues 1–24 (MGVIDMVLFWVLLVNALLIVDASS). The segment at 29-193 (FAYQNEMQRH…SRLVSNSLTL (165 aa)) is pectinesterase inhibitor 54. N-linked (GlcNAc...) asparagine glycosylation is found at asparagine 71 and asparagine 131. The interval 229-496 (HVVVAKDGSG…FSVVKRRNGE (268 aa)) is pectinesterase 54. Glutamine 302 contacts substrate. Aspartate 325 (proton donor; for pectinesterase activity) is an active-site residue. A disulfide bridge connects residues cysteine 339 and cysteine 359. The Nucleophile; for pectinesterase activity role is filled by aspartate 346. Residues arginine 415 and tryptophan 417 each coordinate substrate.

This sequence in the N-terminal section; belongs to the PMEI family. In the C-terminal section; belongs to the pectinesterase family. Expressed in siliques.

The protein resides in the secreted. It is found in the cell wall. It catalyses the reaction [(1-&gt;4)-alpha-D-galacturonosyl methyl ester](n) + n H2O = [(1-&gt;4)-alpha-D-galacturonosyl](n) + n methanol + n H(+). It functions in the pathway glycan metabolism; pectin degradation; 2-dehydro-3-deoxy-D-gluconate from pectin: step 1/5. Functionally, acts in the modification of cell walls via demethylesterification of cell wall pectin. This chain is Probable pectinesterase/pectinesterase inhibitor 54 (PME54), found in Arabidopsis thaliana (Mouse-ear cress).